Here is a 60-residue protein sequence, read N- to C-terminus: Short neurotoxin 1 (60 aa).

4 disulfide bridges follow: Cys-3–Cys-22, Cys-17–Cys-39, Cys-41–Cys-52, and Cys-53–Cys-58.

This sequence belongs to the three-finger toxin family. Short-chain subfamily. Type I alpha-neurotoxin sub-subfamily. In terms of tissue distribution, expressed by the venom gland.

The protein localises to the secreted. Binds to muscle nicotinic acetylcholine receptor (nAChR) and inhibit acetylcholine from binding to the receptor, thereby impairing neuromuscular transmission. The chain is Short neurotoxin 1 from Dendroaspis polylepis polylepis (Black mamba).